The chain runs to 495 residues: MVKTVDFNGRPFHFIGIGGIGMSGLAYILAKRHLPVSGSDVRSSHITQRLQSVGAKVFNTQEATNLTIFQPTPEDSLTTLIPCASGESKKVEKTHQADSALSPNSLPQIICSTAIADNNSEYQAAKELGYPIFHRSDVLAALIKDYYSIGVAGTHGKTTTSSLIGYMLLGGGLDPTIIVGGEVDAWDGNARLGQGQFLVAEVDESDGSLTKHSPRIGIITNIELDHPDHYQTLDEVVKTFQIFEQQCETLIACIDCKTVRTHFKPQITYSLDPDREADYTVKNVTYKTDGSMAEVWEKGQYLGQMHISLLGQHNISNALAAVAVGRTLGLDFEVIASGIATFIGAKRRFEHKGYSQGITFIDDYAHHPSEVRCTLEAARLRLDQDRYRRVVAIFQPHRYSRTATFMDEFATSFDDADVVIVTDIYSAGEVNIGQISGQQVADAISRHHQQVFYHPSLKSLGSFLSQILEPGDLALFLGAGNLNQIIPELISPKVA.

ATP is bound at residue 153 to 159; it reads GTHGKTT.

This sequence belongs to the MurCDEF family.

The protein localises to the cytoplasm. The enzyme catalyses UDP-N-acetyl-alpha-D-muramate + L-alanine + ATP = UDP-N-acetyl-alpha-D-muramoyl-L-alanine + ADP + phosphate + H(+). It functions in the pathway cell wall biogenesis; peptidoglycan biosynthesis. Functionally, cell wall formation. The chain is UDP-N-acetylmuramate--L-alanine ligase from Gloeothece citriformis (strain PCC 7424) (Cyanothece sp. (strain PCC 7424)).